Here is a 159-residue protein sequence, read N- to C-terminus: uncharacterized protein (159 aa).

It belongs to the mimivirus L15/L51/R83 family.

This is an uncharacterized protein from Acanthamoeba polyphaga mimivirus (APMV).